Reading from the N-terminus, the 235-residue chain is Large ribosomal subunit protein uL1 (235 aa).

It belongs to the universal ribosomal protein uL1 family. As to quaternary structure, part of the 50S ribosomal subunit.

Its function is as follows. Binds directly to 23S rRNA. The L1 stalk is quite mobile in the ribosome, and is involved in E site tRNA release. Functionally, protein L1 is also a translational repressor protein, it controls the translation of the L11 operon by binding to its mRNA. This chain is Large ribosomal subunit protein uL1, found in Mycobacterium leprae (strain Br4923).